The chain runs to 165 residues: Regulator of sigma D (165 aa).

It belongs to the Rsd/AlgQ family. As to quaternary structure, interacts with RpoD.

The protein resides in the cytoplasm. In terms of biological role, binds RpoD and negatively regulates RpoD-mediated transcription activation by preventing the interaction between the primary sigma factor RpoD with the catalytic core of the RNA polymerase and with promoter DNA. May be involved in replacement of the RNA polymerase sigma subunit from RpoD to RpoS during the transition from exponential growth to the stationary phase. The protein is Regulator of sigma D of Enterobacter sp. (strain 638).